The chain runs to 144 residues: Deoxyuridine 5'-triphosphate nucleotidohydrolase (144 aa).

Substrate contacts are provided by residues 63 to 65 (RSG), asparagine 76, 80 to 82 (TID), and lysine 90.

This sequence belongs to the dUTPase family. It depends on Mg(2+) as a cofactor.

The enzyme catalyses dUTP + H2O = dUMP + diphosphate + H(+). It participates in pyrimidine metabolism; dUMP biosynthesis; dUMP from dCTP (dUTP route): step 2/2. In terms of biological role, this enzyme is involved in nucleotide metabolism: it produces dUMP, the immediate precursor of thymidine nucleotides and it decreases the intracellular concentration of dUTP so that uracil cannot be incorporated into DNA. This chain is Deoxyuridine 5'-triphosphate nucleotidohydrolase, found in Hydrogenobaculum sp. (strain Y04AAS1).